A 215-amino-acid chain; its full sequence is MGKGDPKKPRGKMSSYAFFVQTCREEHKKKHPDASVNFSEFSKKCSERWKTMSAKEKGKFEDMAKADKARYEREMKTYIPPKGETKKKFKDPNAPKRPPSAFFLFCSEYRPKIKGEHPGLSIGDVAKKLGEMWNNTAADDKQPYEKKAAKLKEKYEKDIAAYRAKGKPDAAKKGVVKAEKSKKKKEEEDDEEDEEDEEEEEEEEDEDEEEDDDDE.

Residue 1 to 10 (MGKGDPKKPR) coordinates heparin. The segment at 1–97 (MGKGDPKKPR…KFKDPNAPKR (97 aa)) is sufficient for interaction with HAVCR2. N6-acetyllysine is present on residues Lys3, Lys7, Lys8, and Lys12. The LPS binding (delipidated) stretch occupies residues 3–15 (KGDPKKPRGKMSS). Positions 9-79 (PRGKMSSYAF…RYEREMKTYI (71 aa)) form a DNA-binding region, HMG box 1. Cys23 is subject to Cysteine sulfonic acid (-SO3H); alternate. Cys23 and Cys45 are disulfide-bonded. Residues 27-43 (HKKKHPDASVNFSEFSK) form an NLS 1 region. The Nuclear localization signal (NLS) 1 motif lies at 27 to 43 (HKKKHPDASVNFSEFSK). N6-acetyllysine is present on residues Lys28, Lys29, and Lys30. Lys28 is covalently cross-linked (Isoglutamyl lysine isopeptide (Lys-Gln) (interchain with Q-?)). Phosphoserine is present on Ser35. Lys43 carries the post-translational modification N6-acetyllysine. Isoglutamyl lysine isopeptide (Lys-Gln) (interchain with Q-?) cross-links involve residues Lys43 and Lys44. Cys45 is subject to Cysteine sulfonic acid (-SO3H); alternate. Residue Lys68 forms an Isoglutamyl lysine isopeptide (Lys-Gln) (interchain with Q-?) linkage. The disordered stretch occupies residues 76–95 (KTYIPPKGETKKKFKDPNAP). Positions 80-96 (PPKGETKKKFKDPNAPK) are LPS binding (Lipid A). Positions 83 to 94 (GETKKKFKDPNA) are enriched in basic and acidic residues. The cytokine-stimulating activity stretch occupies residues 89 to 108 (FKDPNAPKRPPSAFFLFCSE). Residue Lys90 is modified to N6-acetyllysine. Residues 95-163 (PKRPPSAFFL…KYEKDIAAYR (69 aa)) constitute a DNA-binding region (HMG box 2). Ser100 bears the Phosphoserine mark. Cysteine sulfonic acid (-SO3H) is present on Cys106. Residues Lys127, Lys128, Lys141, Lys172, Lys173, Lys177, and Lys180 each carry the N6-acetyllysine modification. The binding to AGER/RAGE stretch occupies residues 150–183 (KLKEKYEKDIAAYRAKGKPDAAKKGVVKAEKSKK). A compositionally biased stretch (basic and acidic residues) spans 161–179 (AYRAKGKPDAAKKGVVKAE). The disordered stretch occupies residues 161 to 215 (AYRAKGKPDAAKKGVVKAEKSKKKKEEEDDEEDEEDEEEEEEEEDEDEEEDDDDE). The tract at residues 178-184 (AEKSKKK) is NLS 2. A Nuclear localization signal (NLS) 2 motif is present at residues 178-184 (AEKSKKK). Lys180 participates in a covalent cross-link: Isoglutamyl lysine isopeptide (Lys-Gln) (interchain with Q-?). Position 181 is an ADP-ribosylserine (Ser181). N6-acetyllysine is present on residues Lys182, Lys183, Lys184, and Lys185. Residues Lys182, Lys183, and Lys184 each participate in an isoglutamyl lysine isopeptide (Lys-Gln) (interchain with Q-?) cross-link. Acidic residues predominate over residues 187 to 215 (EEDDEEDEEDEEEEEEEEDEDEEEDDDDE).

This sequence belongs to the HMGB family. In terms of assembly, interacts (fully reduced HMGB1) with CXCL12; probably in a 1:2 ratio involving two molecules of CXCL12, each interacting with one HMG box of HMGB1; inhibited by glycyrrhizin. Associates with the TLR4:LY96 receptor complex. Component of the RAG complex composed of core components RAG1 and RAG2, and associated component HMGB1 or HMGB2. Interacts (in cytoplasm upon starvation) with BECN1; inhibits the interaction of BECN1 and BCL2 leading to promotion of autophagy. Interacts with KPNA1; involved in nuclear import. Interacts with SREBF1, TLR2, TLR4, TLR9, APEX1, FEN1, POLB, TERT. Interacts with AGER, PTPRZ1, IL1B, MSH2, XPA, XPC, HNF1A, TP53. Interacts with CD24; the probable CD24:SIGLEC10 complex is proposed to inhibit HGMB1-mediated tissue damage immune response. Interacts with THBD; prevents HGMB1 interaction with ACER/RAGE and inhibits HGMB1 pro-inflammatory activity. Interacts with HAVCR2; impairs HMGB1 binding to B-DNA and likely HMGB1-mediated innate immune response. Interacts with XPO1; mediating nuclear export. Interacts with receptor RAGE/AGER. In terms of processing, acetylated on multiple sites upon stimulation with LPS. Acetylation on lysine residues in the nuclear localization signals (NLS 1 and NLS 2) leads to cytoplasmic localization and subsequent secretion. Acetylation on Lys-3 results in preferential binding to DNA ends and impairs DNA bending activity. Post-translationally, phosphorylated at serine residues. Phosphorylation in both NLS regions is required for cytoplasmic translocation followed by secretion. Reduction/oxidation of cysteine residues Cys-23, Cys-45 and Cys-106 and a possible intramolecular disulfide bond involving Cys-23 and Cys-45 give rise to different redox forms with specific functional activities in various cellular compartments: 1- Fully reduced HGMB1 (HMGB1C23hC45hC106h), 2- Disulfide HMGB1 (HMGB1C23-C45C106h) and 3- Sulfonyl HMGB1 (HMGB1C23soC45soC106so). In terms of processing, poly-ADP-ribosylated by PARP1 when secreted following stimulation with LPS. Post-translationally, in vitro cleavage by CASP1 is liberating a HMG box 1-containing peptide which may mediate immunogenic activity; the peptide antagonizes apoptosis-induced immune tolerance. Can be proteolytically cleaved by a thrombin:thrombomodulin complex; reduces binding to heparin and pro-inflammatory activities. Forms covalent cross-links mediated by transglutaminase TGM2, between a glutamine and the epsilon-amino group of a lysine residue, forming homopolymers and heteropolymers. As to expression, serum levels are found elevated in mice with modeled systemic lupus erythematosus (SLE) and are correlated with SLE disease activity.

The protein localises to the nucleus. Its subcellular location is the cytoplasm. It is found in the chromosome. It localises to the cell membrane. The protein resides in the endosome. The protein localises to the endoplasmic reticulum-Golgi intermediate compartment. Its subcellular location is the secreted. Multifunctional redox sensitive protein with various roles in different cellular compartments. In the nucleus is one of the major chromatin-associated non-histone proteins and acts as a DNA chaperone involved in replication, transcription, chromatin remodeling, V(D)J recombination, DNA repair and genome stability. Proposed to be an universal biosensor for nucleic acids. Promotes host inflammatory response to sterile and infectious signals and is involved in the coordination and integration of innate and adaptive immune responses. In the cytoplasm functions as a sensor and/or chaperone for immunogenic nucleic acids implicating the activation of TLR9-mediated immune responses, and mediates autophagy. Acts as a danger associated molecular pattern (DAMP) molecule that amplifies immune responses during tissue injury. Released to the extracellular environment can bind DNA, nucleosomes, IL-1 beta, CXCL12, AGER isoform 2/sRAGE, lipopolysaccharide (LPS) and lipoteichoic acid (LTA), and activates cells through engagement of multiple surface receptors. In the extracellular compartment fully reduced HMGB1 (released by necrosis) acts as a chemokine, disulfide HMGB1 (actively secreted) as a cytokine, and sulfonyl HMGB1 (released from apoptotic cells) promotes immunological tolerance. Has proangiogenic activity. May be involved in platelet activation. Binds to phosphatidylserine and phosphatidylethanolamide. Bound to RAGE mediates signaling for neuronal outgrowth. May play a role in accumulation of expanded polyglutamine (polyQ) proteins. Functionally, nuclear functions are attributed to fully reduced HGMB1. Associates with chromatin and binds DNA with a preference to non-canonical DNA structures such as single-stranded DNA, DNA-containing cruciforms or bent structures, supercoiled DNA and ZDNA. Can bent DNA and enhance DNA flexibility by looping thus providing a mechanism to promote activities on various gene promoters by enhancing transcription factor binding and/or bringing distant regulatory sequences into close proximity. May be involved in nucleotide excision repair (NER), mismatch repair (MMR) and base excision repair (BER) pathways, and double strand break repair such as non-homologous end joining (NHEJ). Involved in V(D)J recombination by acting as a cofactor of the RAG complex: acts by stimulating cleavage and RAG protein binding at the 23 bp spacer of conserved recombination signal sequences (RSS). In vitro can displace histone H1 from highly bent DNA. Can restructure the canonical nucleosome leading to relaxation of structural constraints for transcription factor-binding. Enhances binding of sterol regulatory element-binding proteins (SREBPs) such as SREBF1 to their cognate DNA sequences and increases their transcriptional activities. Facilitates binding of TP53 to DNA. Proposed to be involved in mitochondrial quality control and autophagy in a transcription-dependent fashion implicating HSPB1; however, this function has been questioned. Can modulate the activity of the telomerase complex and may be involved in telomere maintenance. In terms of biological role, in the cytoplasm proposed to dissociate the BECN1:BCL2 complex via competitive interaction with BECN1 leading to autophagy activation. Can protect BECN1 and ATG5 from calpain-mediated cleavage and thus proposed to control their proautophagic and proapoptotic functions and to regulate the extent and severity of inflammation-associated cellular injury. In myeloid cells has a protective role against endotoxemia and bacterial infection by promoting autophagy. Involved in endosomal translocation and activation of TLR9 in response to CpG-DNA in macrophages. Its function is as follows. In the extracellular compartment (following either active secretion or passive release) involved in regulation of the inflammatory response. Fully reduced HGMB1 (which subsequently gets oxidized after release) in association with CXCL12 mediates the recruitment of inflammatory cells during the initial phase of tissue injury; the CXCL12:HMGB1 complex triggers CXCR4 homodimerization. Induces the migration of monocyte-derived immature dendritic cells and seems to regulate adhesive and migratory functions of neutrophils implicating AGER/RAGE and ITGAM. Can bind to various types of DNA and RNA including microbial unmethylated CpG-DNA to enhance the innate immune response to nucleic acids. Proposed to act in promiscuous DNA/RNA sensing which cooperates with subsequent discriminative sensing by specific pattern recognition receptors. Promotes extracellular DNA-induced AIM2 inflammasome activation implicating AGER/RAGE. Disulfide HMGB1 binds to transmembrane receptors, such as AGER/RAGE, TLR2, TLR4 and probably TREM1, thus activating their signal transduction pathways. Mediates the release of cytokines/chemokines such as TNF, IL-1, IL-6, IL-8, CCL2, CCL3, CCL4 and CXCL10. Promotes secretion of interferon-gamma by macrophage-stimulated natural killer (NK) cells in concert with other cytokines like IL-2 or IL-12. TLR4 is proposed to be the primary receptor promoting macrophage activation and signaling through TLR4 seems to implicate LY96/MD-2. In bacterial LPS- or LTA-mediated inflammatory responses binds to the endotoxins and transfers them to CD14 for signaling to the respective TLR4:LY96 and TLR2 complexes. Contributes to tumor proliferation by association with ACER/RAGE. Can bind to IL1-beta and signals through the IL1R1:IL1RAP receptor complex. Binding to class A CpG activates cytokine production in plasmacytoid dendritic cells implicating TLR9, MYD88 and AGER/RAGE and can activate autoreactive B cells. Via HMGB1-containing chromatin immune complexes may also promote B cell responses to endogenous TLR9 ligands through a B-cell receptor (BCR)-dependent and ACER/RAGE-independent mechanism. Inhibits phagocytosis of apoptotic cells by macrophages; the function is dependent on poly-ADP-ribosylation and involves binding to phosphatidylserine on the cell surface of apoptotic cells. In adaptive immunity may be involved in enhancing immunity through activation of effector T-cells and suppression of regulatory T (TReg) cells. In contrast, without implicating effector or regulatory T-cells, required for tumor infiltration and activation of T-cells expressing the lymphotoxin LTA:LTB heterotrimer thus promoting tumor malignant progression. Also reported to limit proliferation of T-cells. Released HMGB1:nucleosome complexes formed during apoptosis can signal through TLR2 to induce cytokine production. Involved in induction of immunological tolerance by apoptotic cells; its pro-inflammatory activities when released by apoptotic cells are neutralized by reactive oxygen species (ROS)-dependent oxidation specifically on Cys-106. During macrophage activation by activated lymphocyte-derived self apoptotic DNA (ALD-DNA) promotes recruitment of ALD-DNA to endosomes. The polypeptide is High mobility group protein B1 (Hmgb1) (Mus musculus (Mouse)).